The sequence spans 256 residues: Ribonuclease HII (256 aa).

In terms of domain architecture, RNase H type-2 spans Lys73 to Val256. Asp79, Glu80, and Asp171 together coordinate a divalent metal cation.

This sequence belongs to the RNase HII family. The cofactor is Mn(2+). Requires Mg(2+) as cofactor.

The protein resides in the cytoplasm. It carries out the reaction Endonucleolytic cleavage to 5'-phosphomonoester.. Its function is as follows. Endonuclease that specifically degrades the RNA of RNA-DNA hybrids. The polypeptide is Ribonuclease HII (Acetivibrio thermocellus (strain ATCC 27405 / DSM 1237 / JCM 9322 / NBRC 103400 / NCIMB 10682 / NRRL B-4536 / VPI 7372) (Clostridium thermocellum)).